The primary structure comprises 310 residues: N-acetyl-gamma-glutamyl-phosphate reductase (310 aa).

Cysteine 117 is a catalytic residue.

Belongs to the NAGSA dehydrogenase family. Type 2 subfamily.

The protein resides in the cytoplasm. The enzyme catalyses N-acetyl-L-glutamate 5-semialdehyde + phosphate + NADP(+) = N-acetyl-L-glutamyl 5-phosphate + NADPH + H(+). Its pathway is amino-acid biosynthesis; L-arginine biosynthesis; N(2)-acetyl-L-ornithine from L-glutamate: step 3/4. Its function is as follows. Catalyzes the NADPH-dependent reduction of N-acetyl-5-glutamyl phosphate to yield N-acetyl-L-glutamate 5-semialdehyde. The sequence is that of N-acetyl-gamma-glutamyl-phosphate reductase from Rhizobium rhizogenes (strain K84 / ATCC BAA-868) (Agrobacterium radiobacter).